The primary structure comprises 184 residues: Small ribosomal subunit protein eS8 (184 aa).

The interval 1-23 (MGISRDSRHKRRLTGGRYPVHKK) is disordered. Residues 7-23 (SRHKRRLTGGRYPVHKK) are compositionally biased toward basic residues.

Belongs to the eukaryotic ribosomal protein eS8 family.

This chain is Small ribosomal subunit protein eS8 (RPS8), found in Theileria annulata.